The chain runs to 160 residues: SsrA-binding protein (160 aa).

Belongs to the SmpB family.

It is found in the cytoplasm. Its function is as follows. Required for rescue of stalled ribosomes mediated by trans-translation. Binds to transfer-messenger RNA (tmRNA), required for stable association of tmRNA with ribosomes. tmRNA and SmpB together mimic tRNA shape, replacing the anticodon stem-loop with SmpB. tmRNA is encoded by the ssrA gene; the 2 termini fold to resemble tRNA(Ala) and it encodes a 'tag peptide', a short internal open reading frame. During trans-translation Ala-aminoacylated tmRNA acts like a tRNA, entering the A-site of stalled ribosomes, displacing the stalled mRNA. The ribosome then switches to translate the ORF on the tmRNA; the nascent peptide is terminated with the 'tag peptide' encoded by the tmRNA and targeted for degradation. The ribosome is freed to recommence translation, which seems to be the essential function of trans-translation. This chain is SsrA-binding protein, found in Chloroflexus aurantiacus (strain ATCC 29364 / DSM 637 / Y-400-fl).